We begin with the raw amino-acid sequence, 226 residues long: Phosphoenolpyruvate guanylyltransferase (226 aa).

The phosphoenolpyruvate site is built by T145, G161, and S164.

It belongs to the CofC family.

It carries out the reaction phosphoenolpyruvate + GTP + H(+) = enolpyruvoyl-2-diphospho-5'-guanosine + diphosphate. It participates in cofactor biosynthesis; coenzyme F420 biosynthesis. Functionally, guanylyltransferase that catalyzes the activation of phosphoenolpyruvate (PEP) as enolpyruvoyl-2-diphospho-5'-guanosine, via the condensation of PEP with GTP. It is involved in the biosynthesis of coenzyme F420, a hydride carrier cofactor. The chain is Phosphoenolpyruvate guanylyltransferase from Nocardia farcinica (strain IFM 10152).